The primary structure comprises 265 residues: Arginine and glutamate-rich protein 1 (265 aa).

Positions 1 to 54 (MGRSRSRSSSRSKHVKSGKHNKKRSRSREKERVRKRSKSRESKRNRRRESRSRS) are enriched in basic residues. The necessary and sufficient for RNA binding stretch occupies residues 1 to 66 (MGRSRSRSSS…NTASRRERER (66 aa)). Residues 1–105 (MGRSRSRSSS…EEKKAEYERQ (105 aa)) form a disordered region. 2 stretches are compositionally biased toward basic and acidic residues: residues 60–76 (SRRERERPASPPDRIDI) and 85–105 (SSLDEKQKREEEEKKAEYERQ). The necessary and sufficient for transcriptional regulation stretch occupies residues 67-265 (PASPPDRIDI…KLSFSFKNPD (199 aa)). An LXXLL motif 1; degenerate motif is present at residues 164–168 (LLEEL). The segment at 172 to 192 (RQAELSAQKAREEEERGKREE) is disordered. The segment covering 180–192 (KAREEEERGKREE) has biased composition (basic and acidic residues). The LXXLL motif 2; degenerate motif lies at 193–197 (LERIL). Residues 229 to 245 (RMKLDQERQRQQKEEQK) show a composition bias toward basic and acidic residues. Residues 229–265 (RMKLDQERQRQQKEEQKIILGKGKSRPKLSFSFKNPD) are disordered.

This sequence belongs to the ARGLU1 family.

It is found in the nucleus. Its subcellular location is the nucleus speckle. The protein resides in the chromosome. Dual function regulator of gene expression; regulator of transcription and modulator of alternative splicing. General coactivator of nuclear receptor-induced gene expression. This chain is Arginine and glutamate-rich protein 1 (arglu1), found in Xenopus laevis (African clawed frog).